The following is a 279-amino-acid chain: Vacuolar iron transporter cccA (279 aa).

Positions M1–P44 are disordered. Residues T30–P44 show a composition bias toward low complexity. A run of 5 helical transmembrane segments spans residues I55 to L75, V80 to G100, I185 to V205, V208 to Y228, and I243 to A263.

This sequence belongs to the CCC1 family.

The protein localises to the vacuole membrane. It carries out the reaction Fe(2+)(in) = Fe(2+)(out). Functionally, vacuolar iron transporter involved in the transfer of iron from the cytosol to the vacuole for intracellular iron storage. Plays an essential role in iron detoxification during high iron conditions. The chain is Vacuolar iron transporter cccA from Arthroderma benhamiae (strain ATCC MYA-4681 / CBS 112371) (Trichophyton mentagrophytes).